A 250-amino-acid polypeptide reads, in one-letter code: Isoprenyl transferase (250 aa).

D27 is an active-site residue. Position 27 (D27) interacts with Mg(2+). Residues 28–31 (GNRR), W32, H48, and 76–78 (STE) each bind substrate. The active-site Proton acceptor is the N79. Substrate contacts are provided by residues F80, R82, R199, and 205 to 207 (RVS). E218 serves as a coordination point for Mg(2+).

The protein belongs to the UPP synthase family. In terms of assembly, homodimer. Mg(2+) serves as cofactor.

Catalyzes the condensation of isopentenyl diphosphate (IPP) with allylic pyrophosphates generating different type of terpenoids. This is Isoprenyl transferase from Chlamydia caviae (strain ATCC VR-813 / DSM 19441 / 03DC25 / GPIC) (Chlamydophila caviae).